The chain runs to 363 residues: MTVTGIIAEFNPFHNGHKYLLDHAEGIKIVAMSGNFVQRGEPAIVDKWIRAQMALENGADLVVELPFFTAVQSADYFASGAVDVLSRLGIDSLTFGTEEVLDYQTIADVYSEKSEEMEAFVESLPSDLSYPQKTQKMWEKFAGVDFTGNTPNHILGLAYAKACAGKGITLNPIQRQGAGYHSLDKEVSFASATSLRLHKEDSDFVDKFMPNSKLFQTSPQVSWDNYFQLLVYQILTNPDLTSVFQVNEEIASRLKAAVREISSVEELVDKVATKRYTKARVRRILTYILVGAVDNSLPKSIHVLGFSQKGQFHLKSVKKSVDIVARIGRKPWDMLTQQADNVYQLGNPELCEQNFGRVPIRVK.

Residues 7–20 (IAEF…HKYL), Gly-96, Asn-152, and Arg-175 each bind ATP.

The protein belongs to the TmcAL family.

Its subcellular location is the cytoplasm. The catalysed reaction is cytidine(34) in elongator tRNA(Met) + acetate + ATP = N(4)-acetylcytidine(34) in elongator tRNA(Met) + AMP + diphosphate. In terms of biological role, catalyzes the formation of N(4)-acetylcytidine (ac(4)C) at the wobble position of elongator tRNA(Met), using acetate and ATP as substrates. First activates an acetate ion to form acetyladenylate (Ac-AMP) and then transfers the acetyl group to tRNA to form ac(4)C34. The protein is tRNA(Met) cytidine acetate ligase of Streptococcus thermophilus (strain ATCC BAA-491 / LMD-9).